We begin with the raw amino-acid sequence, 983 residues long: 3',5'-cyclic-AMP phosphodiesterase, isoforms N/G (983 aa).

4 disordered regions span residues 31-333 (MPEG…SAGL), 349-370 (SDSDFEMSPKSMSRNSSIASES), 400-429 (VPASNKSRRPNQSSSASRSGNPPGAPLSQG), and 528-566 (SAGQYARSRSPRGPPMSQISGVKRPLSHTNSFTGERLPT). The span at 35 to 50 (GEDHRGDLNQKGENNN) shows a compositional bias: basic and acidic residues. Over residues 51–60 (RPRPSISLAN) the composition is skewed to polar residues. The span at 84–97 (SVGGGDSDGGGEAI) shows a compositional bias: gly residues. 2 stretches are compositionally biased toward low complexity: residues 112-121 (LSTTTSNSSS) and 145-167 (QLQQHSSSLSNGNRGNRGLSQRS). Over residues 174 to 199 (AEGEEFDVDPMDEDDEDQTYDRETEE) the composition is skewed to acidic residues. Composition is skewed to low complexity over residues 219-234 (SSLFSRSDSSATTTSS) and 248-261 (AASILSSSMCSDLM). Composition is skewed to polar residues over residues 268–287 (STATEYSVKSVTTGNTSQRR), 358–368 (KSMSRNSSIAS), and 401–419 (PASNKSRRPNQSSSASRSG). Positions 569 to 898 (VETPRENELG…DYYQSMIPPS (330 aa)) constitute a PDEase domain. Catalysis depends on His645, which acts as the Proton donor. Residue 645–649 (HNSLH) participates in 3',5'-cyclic AMP binding. A divalent metal cation-binding residues include His649, His685, Asp686, and Asp803. Positions 686, 803, and 854 each coordinate 3',5'-cyclic AMP. A compositionally biased stretch (acidic residues) spans 920–937 (EESDQENLAELEEGDESG). The tract at residues 920–983 (EESDQENLAE…CQNQPQHGGM (64 aa)) is disordered. Over residues 938-955 (GESTTTGTTGTTAASALS) the composition is skewed to low complexity. Residues 956–967 (GAGGGGGGGGGM) are compositionally biased toward gly residues. Residues 973–983 (GCQNQPQHGGM) are compositionally biased toward polar residues.

Belongs to the cyclic nucleotide phosphodiesterase family. PDE4 subfamily. As to quaternary structure, monomer. Requires a divalent metal cation as cofactor.

It catalyses the reaction 3',5'-cyclic AMP + H2O = AMP + H(+). Its pathway is purine metabolism; 3',5'-cyclic AMP degradation; AMP from 3',5'-cyclic AMP: step 1/1. Hydrolyzes the second messenger cAMP, which is a key regulator of many important physiological processes. Vital for female fertility. Required for learning/memory. The polypeptide is 3',5'-cyclic-AMP phosphodiesterase, isoforms N/G (Drosophila melanogaster (Fruit fly)).